A 282-amino-acid chain; its full sequence is 4-diphosphocytidyl-2-C-methyl-D-erythritol kinase (282 aa).

Lysine 8 is an active-site residue. An ATP-binding site is contributed by 91-101; it reads PVAAGLAGGST. Residue aspartate 133 is part of the active site.

Belongs to the GHMP kinase family. IspE subfamily.

The enzyme catalyses 4-CDP-2-C-methyl-D-erythritol + ATP = 4-CDP-2-C-methyl-D-erythritol 2-phosphate + ADP + H(+). The protein operates within isoprenoid biosynthesis; isopentenyl diphosphate biosynthesis via DXP pathway; isopentenyl diphosphate from 1-deoxy-D-xylulose 5-phosphate: step 3/6. Its function is as follows. Catalyzes the phosphorylation of the position 2 hydroxy group of 4-diphosphocytidyl-2C-methyl-D-erythritol. This chain is 4-diphosphocytidyl-2-C-methyl-D-erythritol kinase, found in Symbiobacterium thermophilum (strain DSM 24528 / JCM 14929 / IAM 14863 / T).